Here is a 465-residue protein sequence, read N- to C-terminus: MAEESSLEVQSQTAQTQARLRFSTRDEDLALPESTGPILVPTGLRRYALSTLVNNLLATEKPVPLEFLINGTYLRTSVDEFLTANGISAETTLDVEYVRALIPPLHVASFLHDDWVSSVDVLSDSQNEERIISASYDGLLRVWNMSSEIIHTSASAKDGGHQSAIKCVRFLSASQIVSSGIDRTVRLWKYTDQEKGITPQIEYYGHKGSVDSIAVHGNRILSASADHTVGFWSTKKSESPAVPQNLLPSSSARSSKRRKLNSSASTSQRGPLALLKGHTAPVSAAIFDAKDSTVGYSTSWDHSLRTWDLVTAALVDTRTTSHSLLCAQHLPEHTLLAAGSAARHVTLIDPRASATTVSAMTLRGHTNAVVCLARDPDSTYGLISGSHDGTSRIWDIRSTKTDTDGVVSESIYTIARKSAGEGKRVGGDGVKVFDVCWDKKVGIVSVGEDKVIQINRGEGVVPKTA.

Residues 18-99 (ARLRFSTRDE…ETTLDVEYVR (82 aa)) form a ubiquitin-like (UBL) domain region. 7 WD repeats span residues 111 to 153 (LHDD…IHTS), 160 to 198 (GHQSAIKCVRFLSASQIVSSGIDRTVRLWKYTDQEKGIT), 205 to 242 (GHKGSVDSIAVHGNRILSASADHTVGFWSTKKSESPAV), 277 to 317 (GHTA…LVDT), 319 to 358 (TTSHSLLCAQHLPEHTLLAAGSAARHVTLIDPRASATTVS), 364 to 404 (GHTN…TDTD), and 427 to 465 (GDGVKVFDVCWDKKVGIVSVGEDKVIQINRGEGVVPKTA). A disordered region spans residues 235-272 (KKSESPAVPQNLLPSSSARSSKRRKLNSSASTSQRGPL).

This sequence belongs to the WD repeat WDR12/YTM1 family. Component of the NOP7 complex, composed of ERB1, NOP7 and YTM1. The complex is held together by ERB1, which interacts with NOP7 via its N-terminal domain and with YTM1 via a high-affinity interaction between the seven-bladed beta-propeller domains of the 2 proteins. The NOP7 complex associates with the 66S pre-ribosome. Interacts (via UBL domain) with MDN1 (via VWFA/MIDAS domain).

Its subcellular location is the nucleus. The protein localises to the nucleolus. It is found in the nucleoplasm. Component of the NOP7 complex, which is required for maturation of the 25S and 5.8S ribosomal RNAs and formation of the 60S ribosome. This is Ribosome biogenesis protein YTM1 from Coccidioides immitis (strain RS) (Valley fever fungus).